We begin with the raw amino-acid sequence, 318 residues long: tRNA-modifying protein YgfZ (318 aa).

Folate contacts are provided by tryptophan 28 and tryptophan 182.

Belongs to the tRNA-modifying YgfZ family.

The protein resides in the cytoplasm. Its function is as follows. Folate-binding protein involved in regulating the level of ATP-DnaA and in the modification of some tRNAs. It is probably a key factor in regulatory networks that act via tRNA modification, such as initiation of chromosomal replication. The chain is tRNA-modifying protein YgfZ from Aliivibrio fischeri (strain MJ11) (Vibrio fischeri).